The sequence spans 2299 residues: Protein Ycf2 (2299 aa).

1642-1649 (GSIGTGRS) contacts ATP.

This sequence belongs to the Ycf2 family.

The protein localises to the plastid. Its subcellular location is the chloroplast stroma. In terms of biological role, probable ATPase of unknown function. Its presence in a non-photosynthetic plant (Epifagus virginiana) and experiments in tobacco indicate that it has an essential function which is probably not related to photosynthesis. The sequence is that of Protein Ycf2 from Nandina domestica (Heavenly bamboo).